The following is a 239-amino-acid chain: Ubiquinone biosynthesis O-methyltransferase (239 aa).

4 residues coordinate S-adenosyl-L-methionine: arginine 44, glycine 63, aspartate 84, and methionine 128.

Belongs to the methyltransferase superfamily. UbiG/COQ3 family.

The catalysed reaction is a 3-demethylubiquinol + S-adenosyl-L-methionine = a ubiquinol + S-adenosyl-L-homocysteine + H(+). The enzyme catalyses a 3-(all-trans-polyprenyl)benzene-1,2-diol + S-adenosyl-L-methionine = a 2-methoxy-6-(all-trans-polyprenyl)phenol + S-adenosyl-L-homocysteine + H(+). It participates in cofactor biosynthesis; ubiquinone biosynthesis. Functionally, O-methyltransferase that catalyzes the 2 O-methylation steps in the ubiquinone biosynthetic pathway. In Xanthomonas axonopodis pv. citri (strain 306), this protein is Ubiquinone biosynthesis O-methyltransferase.